The following is a 439-amino-acid chain: uncharacterized protein (439 aa).

Residue 28 to 35 (GRRRIGKT) participates in ATP binding.

This is an uncharacterized protein from Methanocaldococcus jannaschii (strain ATCC 43067 / DSM 2661 / JAL-1 / JCM 10045 / NBRC 100440) (Methanococcus jannaschii).